Here is a 317-residue protein sequence, read N- to C-terminus: tRNA(Ile)-lysidine synthase (317 aa).

32-37 (SGGVDS) provides a ligand contact to ATP.

This sequence belongs to the tRNA(Ile)-lysidine synthase family.

The protein resides in the cytoplasm. It catalyses the reaction cytidine(34) in tRNA(Ile2) + L-lysine + ATP = lysidine(34) in tRNA(Ile2) + AMP + diphosphate + H(+). Functionally, ligates lysine onto the cytidine present at position 34 of the AUA codon-specific tRNA(Ile) that contains the anticodon CAU, in an ATP-dependent manner. Cytidine is converted to lysidine, thus changing the amino acid specificity of the tRNA from methionine to isoleucine. In Aquifex aeolicus (strain VF5), this protein is tRNA(Ile)-lysidine synthase.